The primary structure comprises 815 residues: Sodium/hydrogen exchanger 1 (815 aa).

Over 1–98 (MVLRSGICGL…FPVLGIDYTH (98 aa)) the chain is Extracellular. O-linked (GalNAc...) threonine glycosylation is present at Thr-42. A disordered region spans residues 42 to 79 (TASTIRSSEPPRERSIGDVTTAPPEVTPESRPVNHSVT). The O-linked (GalNAc...) serine glycan is linked to Ser-56. O-linked (GalNAc...) threonine glycans are attached at residues Thr-61, Thr-62, and Thr-68. N-linked (GlcNAc...) asparagine glycosylation is present at Asn-75. Residues 99–121 (VRTPFEISLWILLACLMKIGFHV) traverse the membrane as a helical segment. Topologically, residues 122-130 (IPTISSIVP) are cytoplasmic. Residues 131–148 (ESCLLIVVGLLVGGLIKG) form a helical membrane-spanning segment. Residues 149 to 158 (VGETPPFLQS) lie on the Extracellular side of the membrane. A helical membrane pass occupies residues 159–176 (DVFFLFLLPPIILDAGYF). The Cytoplasmic segment spans residues 177-186 (LPLRQFTENL). The helical transmembrane segment at 187–215 (GTILIFAVVGTLWNAFFLGGLMYAVCLVG) threads the bilayer. At 216–222 (GEQINNI) the chain is on the extracellular side. Residues 223 to 249 (GLLDNLLFGSIISAVDPVAVLAVFEEI) traverse the membrane as a helical segment. Residues 250-252 (HIN) lie on the Cytoplasmic side of the membrane. Residues 253-283 (ELLHILVFGESLLNDAVTVVLYHLFEEFANY) traverse the membrane as a helical segment. The Extracellular portion of the chain corresponds to 284–287 (EHVG). The helical transmembrane segment at 288-322 (IVDIFLGFLSFFVVALGGVLVGVVYGVIAAFTSRF) threads the bilayer. Residues 323–328 (TSHIRV) are Cytoplasmic-facing. Residues 329–341 (IEPLFVFLYSYMA) traverse the membrane as a helical segment. Topologically, residues 342–350 (YLSAELFHL) are extracellular. A helical transmembrane segment spans residues 351-371 (SGIMALIASGVVMRPYVEANI). Residues 372-373 (SH) are Cytoplasmic-facing. A helical transmembrane segment spans residues 374-404 (KSHTTIKYFLKMWSSVSETLIFIFLGVSTVA). Residues 405-410 (GSHHWN) are Extracellular-facing. Residues 411-438 (WTFVISTLLFCLIARVLGVLGLTWFINK) traverse the membrane as a helical segment. Topologically, residues 439–444 (FRIVKL) are cytoplasmic. Residues 445–469 (TPKDQFIIAYGGLRGAIAFSLGYLL) traverse the membrane as a helical segment. The Extracellular segment spans residues 470–475 (DKKHFP). Residues 476-505 (MCDLFLTAIITVIFFTVFVQGMTIRPLVDL) traverse the membrane as a helical segment. The interval 503 to 545 (VDLLAVKKKQETKRSINEEIHTQFLDHLLTGIEDICGHYGHHH) is interaction with TESC. The Cytoplasmic portion of the chain corresponds to 506-815 (LAVKKKQETK…EGEPFFPKGQ (310 aa)). Residues 509–516 (KKKQETKR) form a PI(4,5)P2-binding region region. Residues 515-545 (KRSINEEIHTQFLDHLLTGIEDICGHYGHHH) are interaction with CHP2. Residues 540-545 (HYGHHH) are confers pH-dependent PI(4,5)P2 binding. The interval 552-560 (RFNKKYVKK) is PI(4,5)P2-binding region. A phosphoserine mark is found at Ser-599 and Ser-602. Position 603 is a phosphothreonine (Thr-603). Phosphoserine occurs at positions 605 and 648. The tract at residues 633–815 (KILRNNLQKT…EGEPFFPKGQ (183 aa)) is interaction with TESC. An interaction with CALM1 region spans residues 633-815 (KILRNNLQKT…EGEPFFPKGQ (183 aa)). The interaction with PPP3CA stretch occupies residues 684-687 (LTVP). A phosphoserine mark is found at Ser-693, Ser-697, and Ser-703. Residues 715 to 720 (PVITID) form an interaction with PPP3CA region. 3 positions are modified to phosphoserine: Ser-723, Ser-726, and Ser-729. Residues 744–815 (LSRDPAKVAE…EGEPFFPKGQ (72 aa)) are disordered. Thr-779 carries the phosphothreonine modification. Positions 782 to 791 (PSDSPSSQRI) are enriched in polar residues. Residues Ser-785, Ser-787, and Ser-796 each carry the phosphoserine modification.

This sequence belongs to the monovalent cation:proton antiporter 1 (CPA1) transporter (TC 2.A.36) family. In terms of assembly, homodimer; dimerization is crucial for its function. Oligomer. Interacts with CALM1 in a calcium-dependent manner. Interacts with TESC. Interacts (via the C-terminal domain) with CHP1; the interaction occurs at the plasma membrane in a calcium-dependent manner and facilitates the maturation, cell surface expression, and function of SLC9A3. Interacts with CHP2; the interaction occurs in a calcium-dependent manner. Interacts with EZR; regulates the cytoskeletal interactions of SLC9A1 and promotes stress fiber formation. O-glycosylated. Post-translationally, ubiquitinated, leading to its degradation by the proteasome. Ubiquitination is reduced by CHP1. In terms of processing, phosphorylation at Thr-779 increases SLC9A1 activity. Specifically dephosphorylated at Thr-779 by PPP3CA that negatively regulates SLC9A1 activity. Phosphorylation at Ser-648 by AKT1 reduces SLC9A1 binding to CALM1. Palmitoylated; may play a major role in SLC9A1 regulation. As to expression, kidney and intestine.

It is found in the cell membrane. The protein localises to the basolateral cell membrane. The enzyme catalyses Na(+)(in) + H(+)(out) = Na(+)(out) + H(+)(in). It carries out the reaction Li(+)(out) + H(+)(in) = Li(+)(in) + H(+)(out). It catalyses the reaction Li(+)(in) + Na(+)(out) = Li(+)(out) + Na(+)(in). Activated at acidic pHs. Inhibited by amiloride and 5-amino-substituted derivatives. Inhibited by cariporide and eniporide. Phosphatidylinositol 4,5-bisphosphate (PI(4,5)P2) and phosphatidylinositol 3,4,5-trisphosphate (PI(3,4,5)P3) bind and differentially regulate SLC9A1 activity. Functionally, electroneutral Na(+) /H(+) antiporter that extrudes Na(+) in exchange for external protons driven by the inward sodium ion chemical gradient, protecting cells from acidification that occurs from metabolism. Exchanges intracellular H(+) ions for extracellular Na(+) in 1:1 stoichiometry. Plays a key role in maintening intracellular pH neutral and cell volume, and thus is important for cell growth, proliferation, migration and survival. In addition, can transport lithium Li(+) and also functions as a Na(+)/Li(+) antiporter. SLC9A1 also functions in membrane anchoring and organization of scaffolding complexes that coordinate signaling inputs. The chain is Sodium/hydrogen exchanger 1 from Homo sapiens (Human).